Consider the following 252-residue polypeptide: Carboxy-S-adenosyl-L-methionine synthase (252 aa).

Residues Tyr-45, 70–72, 95–96, 127–128, Asn-142, and Arg-209 contribute to the S-adenosyl-L-methionine site; these read GCS, DN, and DI.

This sequence belongs to the class I-like SAM-binding methyltransferase superfamily. Cx-SAM synthase family. As to quaternary structure, homodimer.

The catalysed reaction is prephenate + S-adenosyl-L-methionine = carboxy-S-adenosyl-L-methionine + 3-phenylpyruvate + H2O. Functionally, catalyzes the conversion of S-adenosyl-L-methionine (SAM) to carboxy-S-adenosyl-L-methionine (Cx-SAM). This Pseudomonas paraeruginosa (strain DSM 24068 / PA7) (Pseudomonas aeruginosa (strain PA7)) protein is Carboxy-S-adenosyl-L-methionine synthase.